A 188-amino-acid chain; its full sequence is MMHPVASSNPAFCGPGKPSCLNEDAMRAADQFDIYSSQQSKYSHTVNHKPMVCQRQDPLNETHLQTTSGRSIEIKDELKKKKNLNRSGKRGRPSGTTKSAGYRTSTGRPLGTTKAAGFKTSPGRPLGTTKAAGYKVSPGRPPGSIKALSRLADLGYGCGTAAFPYPMMHGRAVHGVEETSSEVKPPNE.

Positions 1–10 are enriched in polar residues; the sequence is MMHPVASSNP. Residues 1 to 20 are disordered; it reads MMHPVASSNPAFCGPGKPSC. Phosphoserine is present on Ser37. Residue Lys75 forms a Glycyl lysine isopeptide (Lys-Gly) (interchain with G-Cter in SUMO2) linkage. The tract at residues 79-142 is disordered; sequence KKKKNLNRSG…GYKVSPGRPP (64 aa). The span at 80–92 shows a compositional bias: basic residues; the sequence is KKKNLNRSGKRGR. The segment covering 94-107 has biased composition (polar residues); that stretch reads SGTTKSAGYRTSTG. 2 positions are modified to phosphoserine: Ser121 and Ser180. Residue Lys184 forms a Glycyl lysine isopeptide (Lys-Gly) (interchain with G-Cter in SUMO2) linkage.

Belongs to the UPF0461 family.

This Homo sapiens (Human) protein is UPF0461 protein C5orf24 (C5orf24).